The sequence spans 305 residues: tRNA uridine(34) hydroxylase (305 aa).

One can recognise a Rhodanese domain in the interval 130-228 (DDPDTLVIDT…YLGEIPEQES (99 aa)). The Cysteine persulfide intermediate role is filled by C188.

The protein belongs to the TrhO family.

The catalysed reaction is uridine(34) in tRNA + AH2 + O2 = 5-hydroxyuridine(34) in tRNA + A + H2O. Its function is as follows. Catalyzes oxygen-dependent 5-hydroxyuridine (ho5U) modification at position 34 in tRNAs. This chain is tRNA uridine(34) hydroxylase, found in Synechococcus sp. (strain CC9902).